A 72-amino-acid chain; its full sequence is Translation initiation factor IF-1 (72 aa).

In terms of domain architecture, S1-like spans 1–72 (MAKEESIEIE…TKGRITYRYK (72 aa)).

The protein belongs to the IF-1 family. As to quaternary structure, component of the 30S ribosomal translation pre-initiation complex which assembles on the 30S ribosome in the order IF-2 and IF-3, IF-1 and N-formylmethionyl-tRNA(fMet); mRNA recruitment can occur at any time during PIC assembly.

The protein resides in the cytoplasm. In terms of biological role, one of the essential components for the initiation of protein synthesis. Stabilizes the binding of IF-2 and IF-3 on the 30S subunit to which N-formylmethionyl-tRNA(fMet) subsequently binds. Helps modulate mRNA selection, yielding the 30S pre-initiation complex (PIC). Upon addition of the 50S ribosomal subunit IF-1, IF-2 and IF-3 are released leaving the mature 70S translation initiation complex. This chain is Translation initiation factor IF-1, found in Chlorobium chlorochromatii (strain CaD3).